Here is a 216-residue protein sequence, read N- to C-terminus: MSITAAQVNELRKVTGAGLMDCKKALTETGGDHEKAIDYLRTKGLAAASKKAGRAATEGLVGSYIHAGGKIGVLVEVNCETDFVAKNENFQAFVKDIAMHIAAASPLYVRREEVPAELIEREKAIYREKAKESGKPAAIIEKILDGQINKFFADICLLEQTYVKDPDKTIQTFLNETIASIGENMSIRRFAKFVLGEGLAKKESDFAAEVAAAVGQ.

The interval 81-84 is involved in Mg(2+) ion dislocation from EF-Tu; sequence TDFV.

The protein belongs to the EF-Ts family.

It is found in the cytoplasm. In terms of biological role, associates with the EF-Tu.GDP complex and induces the exchange of GDP to GTP. It remains bound to the aminoacyl-tRNA.EF-Tu.GTP complex up to the GTP hydrolysis stage on the ribosome. The sequence is that of Elongation factor Ts from Geobacter sp. (strain M21).